A 368-amino-acid polypeptide reads, in one-letter code: MIRTYTQRALAQAWLNRFRGHLPAFACILGFTQTGLIPGISAAGATPADRQYTAIADAEFLLNGPQPQPRYPLPPLTAGASPVLISHAVVSGLGLPVYLFNAGLPIPPAVSAIDLGGEPARCLSTGAALNLATVHHLLTQGLVWGETLADQHPYLLLGECVVGGTTTALAILTGLGYAAATKVNSSHPICNHAQKWEIVQQGLGRSPLKPSHPAPLDLVAAVGDPMQIVVAGMTIAASRKVGVLLAGGTQMLAVYALARAIACTEQLVWQPEAVVVGTTRWVAEDPTGDTVGLAEETDIPLLGSQLSFVRSRFPQLQAYEQGYVKEGVGAGGCAIAASLYRGWGQQELLTAIEAVGDRYSQVSAGSGG.

Belongs to the UPF0284 family.

The polypeptide is UPF0284 protein Cyan7425_0342 (Cyanothece sp. (strain PCC 7425 / ATCC 29141)).